The primary structure comprises 289 residues: ATP synthase gamma chain (289 aa).

It belongs to the ATPase gamma chain family. F-type ATPases have 2 components, CF(1) - the catalytic core - and CF(0) - the membrane proton channel. CF(1) has five subunits: alpha(3), beta(3), gamma(1), delta(1), epsilon(1). CF(0) has three main subunits: a, b and c.

The protein localises to the cell inner membrane. In terms of biological role, produces ATP from ADP in the presence of a proton gradient across the membrane. The gamma chain is believed to be important in regulating ATPase activity and the flow of protons through the CF(0) complex. In Aromatoleum aromaticum (strain DSM 19018 / LMG 30748 / EbN1) (Azoarcus sp. (strain EbN1)), this protein is ATP synthase gamma chain.